A 138-amino-acid chain; its full sequence is Large ribosomal subunit protein uL13 (138 aa).

It belongs to the universal ribosomal protein uL13 family. In terms of assembly, part of the 50S ribosomal subunit.

Functionally, this protein is one of the early assembly proteins of the 50S ribosomal subunit, although it is not seen to bind rRNA by itself. It is important during the early stages of 50S assembly. This is Large ribosomal subunit protein uL13 from Picrophilus torridus (strain ATCC 700027 / DSM 9790 / JCM 10055 / NBRC 100828 / KAW 2/3).